Reading from the N-terminus, the 408-residue chain is GTPase HflX (408 aa).

The Hflx-type G domain occupies 198–361 (PRVSLVGYTN…LIVREMERHY (164 aa)). Residues 204–211 (GYTNAGKS), 229–233 (FVTLD), 251–254 (DTVG), 317–320 (NKAD), and 339–341 (SAK) each bind GTP. Serine 211 and threonine 231 together coordinate Mg(2+).

The protein belongs to the TRAFAC class OBG-HflX-like GTPase superfamily. HflX GTPase family. Monomer. Associates with the 50S ribosomal subunit. Mg(2+) serves as cofactor.

It is found in the cytoplasm. Its function is as follows. GTPase that associates with the 50S ribosomal subunit and may have a role during protein synthesis or ribosome biogenesis. In Spirochaeta thermophila (strain ATCC 49972 / DSM 6192 / RI 19.B1), this protein is GTPase HflX.